We begin with the raw amino-acid sequence, 240 residues long: Large ribosomal subunit protein uL2 (240 aa).

Polar residues predominate over residues 1–20 (MGKRLQSQNRGKGTPRYTSP). 2 disordered regions span residues 1 to 33 (MGKRLQSQNRGKGTPRYTSPTHKRKGAVKYRKF) and 204 to 240 (PFGGGNTQHAGKPTTISRHTSPGRKVGHIAARRTGKR). Composition is skewed to basic residues over residues 21–30 (THKRKGAVKY) and 224–240 (SPGRKVGHIAARRTGKR).

The protein belongs to the universal ribosomal protein uL2 family. Part of the 50S ribosomal subunit. Forms a bridge to the 30S subunit in the 70S ribosome.

Functionally, one of the primary rRNA binding proteins. Required for association of the 30S and 50S subunits to form the 70S ribosome, for tRNA binding and peptide bond formation. It has been suggested to have peptidyltransferase activity; this is somewhat controversial. Makes several contacts with the 16S rRNA in the 70S ribosome. The sequence is that of Large ribosomal subunit protein uL2 from Methanococcus aeolicus (strain ATCC BAA-1280 / DSM 17508 / OCM 812 / Nankai-3).